A 177-amino-acid chain; its full sequence is Large ribosomal subunit protein uL6 (177 aa).

Belongs to the universal ribosomal protein uL6 family. In terms of assembly, part of the 50S ribosomal subunit.

In terms of biological role, this protein binds to the 23S rRNA, and is important in its secondary structure. It is located near the subunit interface in the base of the L7/L12 stalk, and near the tRNA binding site of the peptidyltransferase center. This Verminephrobacter eiseniae (strain EF01-2) protein is Large ribosomal subunit protein uL6.